A 618-amino-acid chain; its full sequence is Probable N-acetylgalactosaminyltransferase 6 (618 aa).

The Cytoplasmic segment spans residues 1–16; sequence MIASLIRSRRRSRRCV. Residues 17-39 form a helical; Signal-anchor for type II membrane protein membrane-spanning segment; the sequence is VYSVFLFGFLALWGSFALALVFL. At 40–618 the chain is on the lumenal side; the sequence is SDMYIGEDQI…TEMSWLPEHP (579 aa). Asn-81 and Asn-149 each carry an N-linked (GlcNAc...) asparagine glycan. Disulfide bonds link Cys-147/Cys-381 and Cys-372/Cys-452. The segment at 156–267 is catalytic subdomain A; sequence LPTTSVIIVY…KGWLEPLLTR (112 aa). The substrate site is built by Asp-197 and Arg-228. Asp-251 contacts Mn(2+). Residue Ser-252 participates in substrate binding. Residue His-253 participates in Mn(2+) binding. Residues 327–389 are catalytic subdomain B; that stretch reads PIESPTMAGG…PCSHVGHVFR (63 aa). Trp-358 provides a ligand contact to substrate. His-386 lines the Mn(2+) pocket. A substrate-binding site is contributed by Arg-389. Positions 474–609 constitute a Ricin B-type lectin domain; that stretch reads RFGRMTSSSN…SNDRQNWTIT (136 aa). N-linked (GlcNAc...) asparagine glycosylation occurs at Asn-483. 3 disulfides stabilise this stretch: Cys-487-Cys-505, Cys-530-Cys-550, and Cys-575-Cys-597. Asn-605 is a glycosylation site (N-linked (GlcNAc...) asparagine).

Belongs to the glycosyltransferase 2 family. GalNAc-T subfamily. Mn(2+) serves as cofactor.

It localises to the golgi apparatus membrane. Its pathway is protein modification; protein glycosylation. In terms of biological role, probable glycopeptide transferase involved in O-linked oligosaccharide biosynthesis. Glycopeptide transferases catalyze the transfer of an N-acetyl-D-galactosamine residue to an already glycosylated peptide. In contrast to other members of the family, it does not act as a peptide transferase that transfers GalNAc onto serine or threonine residue on peptides that have been tested. Some peptide transferase activity is however not excluded, considering that its appropriate peptide substrate may remain unidentified. This Caenorhabditis elegans protein is Probable N-acetylgalactosaminyltransferase 6 (gly-6).